The sequence spans 263 residues: Very long chain fatty acid elongase F (263 aa).

Transmembrane regions (helical) follow at residues 10–30 (IPVFSDPWITMATLSGYLLFV), 55–75 (IFQILYNGLILVLGVHFLFVL), 98–118 (LICILYMLNKFVDLVETIFFV), 135–155 (FAMAFLGYLYYYFHGYGGVAF), 159–179 (LCLLNTAVHVIMYAYYYLSSI), 193–213 (ITIAQLVQFGIILLHCTITLA), and 223–243 (LTYGCGSLSAFFAVIFSQFYY).

The protein belongs to the ELO family. No expression in adults.

The protein resides in the endoplasmic reticulum membrane. It catalyses the reaction a very-long-chain acyl-CoA + malonyl-CoA + H(+) = a very-long-chain 3-oxoacyl-CoA + CO2 + CoA. Condensing enzyme that elongates saturated and monounsaturated very long chain fatty acids, to yield products up to 30 carbons in length. The protein is Very long chain fatty acid elongase F of Drosophila simulans (Fruit fly).